Reading from the N-terminus, the 148-residue chain is Puroindoline-B (148 aa).

A signal peptide spans 1–19 (MKTLFLLALLALVASTTFA). Positions 20 to 29 (QYSEVGGWYN) are excised as a propeptide.

Five disulfide bonds are present. Endosperm and aleurone layer of developing kernels. In the aleurone layer, mainly localized to starch granules and the surface of the plasma membrane, forming a uniform layer, also abundant in the intercellular space. In the endosperm, mainly localized to starch granules and the plasma membrane, but less abundant in the intercellular space. Not found in roots or coleoptiles.

Its subcellular location is the membrane. The protein localises to the secreted. The protein resides in the extracellular space. Acts as a membranotoxin, probably through its antibacterial and antifungal activities, contributing to the defense mechanism of the plant against predators. Forms monovalent cation-selective ion channels in membranes. Has antibacterial activity against the Gram-positive bacteria S.aureus and C.michiganensis, and the Gram-negative bacteria E.coli, P.syringae pv phaseoli, A.tumefaciens and E.carotovora subsp carotovora. Acts synergistically with PINA against bacteria. Contributes to grain texture and hardness. This is Puroindoline-B (PINB) from Triticum aestivum (Wheat).